The chain runs to 252 residues: Large ribosomal subunit protein uL4 (252 aa).

The protein belongs to the universal ribosomal protein uL4 family. Part of the 50S ribosomal subunit.

One of the primary rRNA binding proteins, this protein initially binds near the 5'-end of the 23S rRNA. It is important during the early stages of 50S assembly. It makes multiple contacts with different domains of the 23S rRNA in the assembled 50S subunit and ribosome. Its function is as follows. Forms part of the polypeptide exit tunnel. This is Large ribosomal subunit protein uL4 from Methanococcus maripaludis (strain DSM 14266 / JCM 13030 / NBRC 101832 / S2 / LL).